A 30-amino-acid chain; its full sequence is Uperin-6.1 (30 aa).

As to expression, expressed by the skin dorsal glands.

It localises to the secreted. The chain is Uperin-6.1 from Uperoleia inundata (Floodplain toadlet).